The sequence spans 424 residues: Calreticulin-2 (424 aa).

The signal sequence occupies residues 1 to 22 (MAKMIPSLVSLILIGLVAIASA). N-linked (GlcNAc...) asparagine glycosylation occurs at N59. A disulfide bond links C108 and C140. The an alpha-D-glucoside site is built by Y112, K114, Y131, and D138. A run of 7 repeats spans residues 194 to 205 (KQTGSLYSDWDL), 213 to 224 (DPSAKKPEDWDE), 230 to 241 (DPEDKKPDGYDD), 248 to 259 (DTDSKKPEDWDD), 263 to 273 (GEWTAPTIPNP), 277 to 287 (GEWKPKQIKNP), and 291 to 301 (GKWEAPLIDNP). Residues 194–259 (KQTGSLYSDW…DSKKPEDWDD (66 aa)) form a 4 X approximate repeats region. Over residues 210-220 (KIKDPSAKKPE) the composition is skewed to basic and acidic residues. The interval 210 to 279 (KIKDPSAKKP…IPNPEYMGEW (70 aa)) is disordered. Residues 221-230 (DWDEQEYISD) are compositionally biased toward acidic residues. The segment covering 231–255 (PEDKKPDGYDDIPKEIPDTDSKKPE) has biased composition (basic and acidic residues). The 3 X approximate repeats stretch occupies residues 263-301 (GEWTAPTIPNPEYMGEWKPKQIKNPNYKGKWEAPLIDNP). E321 lines the an alpha-D-glucoside pocket. A compositionally biased stretch (basic and acidic residues) spans 362–378 (FDEAEKKNEEEESKDAP). Residues 362 to 424 (FDEAEKKNEE…EKDATAHDEL (63 aa)) form a disordered region. Residues 379–397 (AESDAEDEPEDDEGGDDSD) are compositionally biased toward acidic residues. 2 positions are modified to phosphoserine: S381 and S396. The span at 398 to 424 (SESKAEETKSVDSEETSEKDATAHDEL) shows a compositional bias: basic and acidic residues. Residues 421–424 (HDEL) carry the Prevents secretion from ER motif.

It belongs to the calreticulin family.

It is found in the endoplasmic reticulum lumen. In terms of biological role, molecular calcium-binding chaperone promoting folding, oligomeric assembly and quality control in the ER via the calreticulin/calnexin cycle. This lectin may interact transiently with almost all of the monoglucosylated glycoproteins that are synthesized in the ER. The polypeptide is Calreticulin-2 (CRT2) (Arabidopsis thaliana (Mouse-ear cress)).